A 628-amino-acid chain; its full sequence is Dihydroxy-acid dehydratase (628 aa).

Asp-80 is a Mg(2+) binding site. Residue Cys-121 coordinates [2Fe-2S] cluster. Mg(2+) is bound by residues Asp-122 and Lys-123. Lys-123 bears the N6-carboxylysine mark. Cys-207 contributes to the [2Fe-2S] cluster binding site. Glu-503 lines the Mg(2+) pocket. Ser-529 functions as the Proton acceptor in the catalytic mechanism.

Belongs to the IlvD/Edd family. As to quaternary structure, homodimer. [2Fe-2S] cluster is required as a cofactor. The cofactor is Mg(2+).

The enzyme catalyses (2R)-2,3-dihydroxy-3-methylbutanoate = 3-methyl-2-oxobutanoate + H2O. It carries out the reaction (2R,3R)-2,3-dihydroxy-3-methylpentanoate = (S)-3-methyl-2-oxopentanoate + H2O. It functions in the pathway amino-acid biosynthesis; L-isoleucine biosynthesis; L-isoleucine from 2-oxobutanoate: step 3/4. The protein operates within amino-acid biosynthesis; L-valine biosynthesis; L-valine from pyruvate: step 3/4. Its function is as follows. Functions in the biosynthesis of branched-chain amino acids. Catalyzes the dehydration of (2R,3R)-2,3-dihydroxy-3-methylpentanoate (2,3-dihydroxy-3-methylvalerate) into 2-oxo-3-methylpentanoate (2-oxo-3-methylvalerate) and of (2R)-2,3-dihydroxy-3-methylbutanoate (2,3-dihydroxyisovalerate) into 2-oxo-3-methylbutanoate (2-oxoisovalerate), the penultimate precursor to L-isoleucine and L-valine, respectively. The polypeptide is Dihydroxy-acid dehydratase (Psychrobacter arcticus (strain DSM 17307 / VKM B-2377 / 273-4)).